Consider the following 141-residue polypeptide: Large ribosomal subunit protein uL22 (141 aa).

It belongs to the universal ribosomal protein uL22 family. Part of the 50S ribosomal subunit.

This protein binds specifically to 23S rRNA; its binding is stimulated by other ribosomal proteins, e.g. L4, L17, and L20. It is important during the early stages of 50S assembly. It makes multiple contacts with different domains of the 23S rRNA in the assembled 50S subunit and ribosome. Functionally, the globular domain of the protein is located near the polypeptide exit tunnel on the outside of the subunit, while an extended beta-hairpin is found that lines the wall of the exit tunnel in the center of the 70S ribosome. The polypeptide is Large ribosomal subunit protein uL22 (Frankia casuarinae (strain DSM 45818 / CECT 9043 / HFP020203 / CcI3)).